A 68-amino-acid polypeptide reads, in one-letter code: uncharacterized protein (68 aa).

The HMA domain maps to 2-67; sequence KTITLNIKGI…VIEDAGFDAT (66 aa). Positions 13 and 16 each coordinate a metal cation.

This is an uncharacterized protein from Haemophilus influenzae (strain ATCC 51907 / DSM 11121 / KW20 / Rd).